Here is a 132-residue protein sequence, read N- to C-terminus: Small ribosomal subunit protein uS8 (132 aa).

This sequence belongs to the universal ribosomal protein uS8 family. As to quaternary structure, part of the 30S ribosomal subunit. Contacts proteins S5 and S12.

In terms of biological role, one of the primary rRNA binding proteins, it binds directly to 16S rRNA central domain where it helps coordinate assembly of the platform of the 30S subunit. The sequence is that of Small ribosomal subunit protein uS8 from Levilactobacillus brevis (strain ATCC 367 / BCRC 12310 / CIP 105137 / JCM 1170 / LMG 11437 / NCIMB 947 / NCTC 947) (Lactobacillus brevis).